The chain runs to 86 residues: Large ribosomal subunit protein bL27c (86 aa).

A disordered region spans residues 1–27 (MAHKKGSGSTRNGRDSNSKRLGVKKYG).

This sequence belongs to the bacterial ribosomal protein bL27 family.

The protein localises to the plastid. The protein resides in the chloroplast. This is Large ribosomal subunit protein bL27c from Pyropia yezoensis (Susabi-nori).